Consider the following 634-residue polypeptide: BTB/POZ domain-containing protein At1g03010 (634 aa).

A BTB domain is found at 38-103; it reads SDLTVQVGSS…CYGINIEINL (66 aa). Positions 205 to 503 constitute an NPH3 domain; the sequence is DWWGKSLAVL…VQVLYFEQIR (299 aa). Tyr-444 carries the phosphotyrosine modification. Residues 542–580 adopt a coiled-coil conformation; the sequence is RDNYASVRRENRELKLEVARMRMRLTDLEKDHISIKQEL.

Belongs to the NPH3 family.

It functions in the pathway protein modification; protein ubiquitination. May act as a substrate-specific adapter of an E3 ubiquitin-protein ligase complex (CUL3-RBX1-BTB) which mediates the ubiquitination and subsequent proteasomal degradation of target proteins. This Arabidopsis thaliana (Mouse-ear cress) protein is BTB/POZ domain-containing protein At1g03010.